A 149-amino-acid polypeptide reads, in one-letter code: UPF0756 membrane protein BBR47_12340 (149 aa).

4 helical membrane-spanning segments follow: residues 6–26 (IILL…LVYA), 48–68 (PMFH…IAKG), 86–106 (IAIL…SILP), and 120–140 (LLAV…AGCI).

This sequence belongs to the UPF0756 family.

It localises to the cell membrane. This chain is UPF0756 membrane protein BBR47_12340, found in Brevibacillus brevis (strain 47 / JCM 6285 / NBRC 100599).